The following is an 882-amino-acid chain: Alanine--tRNA ligase (882 aa).

Zn(2+)-binding residues include H570, H574, C672, and H676.

The protein belongs to the class-II aminoacyl-tRNA synthetase family. It depends on Zn(2+) as a cofactor.

Its subcellular location is the cytoplasm. It carries out the reaction tRNA(Ala) + L-alanine + ATP = L-alanyl-tRNA(Ala) + AMP + diphosphate. Catalyzes the attachment of alanine to tRNA(Ala) in a two-step reaction: alanine is first activated by ATP to form Ala-AMP and then transferred to the acceptor end of tRNA(Ala). Also edits incorrectly charged Ser-tRNA(Ala) and Gly-tRNA(Ala) via its editing domain. This chain is Alanine--tRNA ligase, found in Xanthomonas campestris pv. campestris (strain B100).